Reading from the N-terminus, the 339-residue chain is Dihydroorotate dehydrogenase (quinone) (339 aa).

FMN-binding positions include 62–66 (AGMDK) and Thr86. A substrate-binding site is contributed by Lys66. 111–115 (NRMGF) serves as a coordination point for substrate. Positions 139 and 172 each coordinate FMN. Residue Asn172 participates in substrate binding. The active-site Nucleophile is Ser175. Substrate is bound at residue Asn177. FMN contacts are provided by Lys217 and Thr245. 246–247 (NT) lines the substrate pocket. Residues Gly268, Gly297, and 318-319 (FS) each bind FMN.

Belongs to the dihydroorotate dehydrogenase family. Type 2 subfamily. As to quaternary structure, monomer. FMN is required as a cofactor.

Its subcellular location is the cell membrane. The enzyme catalyses (S)-dihydroorotate + a quinone = orotate + a quinol. It participates in pyrimidine metabolism; UMP biosynthesis via de novo pathway; orotate from (S)-dihydroorotate (quinone route): step 1/1. Catalyzes the conversion of dihydroorotate to orotate with quinone as electron acceptor. This is Dihydroorotate dehydrogenase (quinone) from Shewanella halifaxensis (strain HAW-EB4).